A 59-amino-acid polypeptide reads, in one-letter code: Small integral membrane protein 30 (59 aa).

The first 24 residues, 1-24, serve as a signal peptide directing secretion; sequence MNSVSTQLILVLASLLLILPVVEA. Residues 25–29 lie on the Extracellular side of the membrane; that stretch reads VEAGD. A helical membrane pass occupies residues 30 to 50; the sequence is AIALLLGVVLSITGICACLGI. Residues 51–59 lie on the Cytoplasmic side of the membrane; the sequence is YARKRNGQM.

Interacts (via transmembrane domain) with antiviral protein MAVS (via transmembrane domain); the interaction disrupts MAVS interaction with RIGI and inhibits MAVS aggregation, resulting in the repression of type I interferon signaling and innate immune responses.

It is found in the endoplasmic reticulum membrane. Its subcellular location is the mitochondrion membrane. In terms of biological role, negatively regulates antiviral innate immune responses. Disrupts the interaction of antiviral protein MAVS with innate immune receptor RIGI and inhibits MAVS aggregation, resulting in the repression of type I interferon signaling and innate immune responses. This Mus musculus (Mouse) protein is Small integral membrane protein 30.